The primary structure comprises 376 residues: Protein FAM199X (376 aa).

Residues 237 to 253 show a composition bias toward basic and acidic residues; it reads YIKEHSPRQRSTRESWK. A disordered region spans residues 237–350; that stretch reads YIKEHSPRQR…QRQARKERLS (114 aa). Residues 255–300 are compositionally biased toward low complexity; it reads TSYSTASTSGVSGASVSSSSASMVSTASSTGSSGGNSASNSSANMS. A compositionally biased stretch (basic residues) spans 318 to 337; that stretch reads DSKKRSKQRKLQQKALRKRQ. The stretch at 320–349 forms a coiled coil; that stretch reads KKRSKQRKLQQKALRKRQLKEQRQARKERL. Over residues 338–349 the composition is skewed to basic and acidic residues; it reads LKEQRQARKERL.

It belongs to the FAM199 family.

This Xenopus tropicalis (Western clawed frog) protein is Protein FAM199X (fam199x).